Consider the following 173-residue polypeptide: Translation initiation factor IF-3 (173 aa).

Belongs to the IF-3 family. As to quaternary structure, monomer.

The protein localises to the cytoplasm. IF-3 binds to the 30S ribosomal subunit and shifts the equilibrium between 70S ribosomes and their 50S and 30S subunits in favor of the free subunits, thus enhancing the availability of 30S subunits on which protein synthesis initiation begins. The protein is Translation initiation factor IF-3 of Bacillus subtilis (strain 168).